Consider the following 415-residue polypeptide: Serine--tRNA ligase (415 aa).

231–233 (TAE) is an L-serine binding site. Residue 262 to 264 (RSE) participates in ATP binding. Residue Glu-285 coordinates L-serine. 349 to 352 (EISS) contributes to the ATP binding site. L-serine is bound at residue Ser-383.

Belongs to the class-II aminoacyl-tRNA synthetase family. Type-1 seryl-tRNA synthetase subfamily. In terms of assembly, homodimer. The tRNA molecule binds across the dimer.

The protein resides in the cytoplasm. It carries out the reaction tRNA(Ser) + L-serine + ATP = L-seryl-tRNA(Ser) + AMP + diphosphate + H(+). The catalysed reaction is tRNA(Sec) + L-serine + ATP = L-seryl-tRNA(Sec) + AMP + diphosphate + H(+). It participates in aminoacyl-tRNA biosynthesis; selenocysteinyl-tRNA(Sec) biosynthesis; L-seryl-tRNA(Sec) from L-serine and tRNA(Sec): step 1/1. Catalyzes the attachment of serine to tRNA(Ser). Is also able to aminoacylate tRNA(Sec) with serine, to form the misacylated tRNA L-seryl-tRNA(Sec), which will be further converted into selenocysteinyl-tRNA(Sec). This is Serine--tRNA ligase from Helicobacter pylori (strain G27).